We begin with the raw amino-acid sequence, 1028 residues long: Multidrug resistance protein MdtC (1028 aa).

12 consecutive transmembrane segments (helical) span residues 3–23 (FFAL…AITL), 333–353 (EVEQ…FLFL), 360–380 (LIPA…MYLC), 387–407 (LSLM…IVVL), 431–451 (VGFT…PLLL), 463–483 (FAVT…TLTP), 528–548 (LVGV…ISIP), 853–873 (VILI…LYES), 875–895 (VHPL…LLAL), 897–917 (LFNA…IGIV), 953–973 (PIMM…ISGG), and 984–1004 (ITIV…TPVV).

This sequence belongs to the resistance-nodulation-cell division (RND) (TC 2.A.6) family. MdtC subfamily. In terms of assembly, part of a tripartite efflux system composed of MdtA, MdtB and MdtC. MdtC forms a heteromultimer with MdtB.

It is found in the cell inner membrane. This Citrobacter koseri (strain ATCC BAA-895 / CDC 4225-83 / SGSC4696) protein is Multidrug resistance protein MdtC.